The following is a 282-amino-acid chain: Putative glycosyltransferase HI_0765 (282 aa).

It belongs to the glycosyltransferase 25 family.

This Haemophilus influenzae (strain ATCC 51907 / DSM 11121 / KW20 / Rd) protein is Putative glycosyltransferase HI_0765.